A 493-amino-acid chain; its full sequence is 3-octaprenyl-4-hydroxybenzoate carboxy-lyase (493 aa).

Residue asparagine 172 coordinates Mn(2+). Residues 175–177 (IYR), 189–191 (RWL), and 194–195 (RG) each bind prenylated FMN. Glutamate 238 contacts Mn(2+). Catalysis depends on aspartate 287, which acts as the Proton donor.

Belongs to the UbiD family. In terms of assembly, homohexamer. Prenylated FMN is required as a cofactor. Mn(2+) serves as cofactor.

It localises to the cell membrane. It carries out the reaction a 4-hydroxy-3-(all-trans-polyprenyl)benzoate + H(+) = a 2-(all-trans-polyprenyl)phenol + CO2. It functions in the pathway cofactor biosynthesis; ubiquinone biosynthesis. Catalyzes the decarboxylation of 3-octaprenyl-4-hydroxy benzoate to 2-octaprenylphenol, an intermediate step in ubiquinone biosynthesis. This is 3-octaprenyl-4-hydroxybenzoate carboxy-lyase from Shewanella frigidimarina (strain NCIMB 400).